We begin with the raw amino-acid sequence, 312 residues long: Putative HTH-type transcriptional regulatory protein TV0294 (312 aa).

Positions 133 to 186 constitute an HTH cro/C1-type domain; sequence LRERRNELNLSIGNISSYLGVSRRSVSLYENGSAATIDIFIRLRNILKADIVDH. A DNA-binding region (H-T-H motif) is located at residues 144–163; sequence IGNISSYLGVSRRSVSLYEN.

The sequence is that of Putative HTH-type transcriptional regulatory protein TV0294 from Thermoplasma volcanium (strain ATCC 51530 / DSM 4299 / JCM 9571 / NBRC 15438 / GSS1).